The following is a 600-amino-acid chain: Sulfite reductase [NADPH] flavoprotein alpha-component (600 aa).

A Flavodoxin-like domain is found at 63-201 (ITLISASQTG…VADQWRKQLT (139 aa)). Residues 69 to 74 (SQTGNA), 116 to 119 (STQG), and 152 to 161 (LGDTSYERFC) contribute to the FMN site. The 215-residue stretch at 235–449 (QAPLTAALAT…IEHNDNFRLP (215 aa)) folds into the FAD-binding FR-type domain. FAD-binding positions include T323, H357, 387-390 (RLYS), 405-407 (TVG), Y411, and 420-423 (GGAS). Residues 520 to 521 (SR), 526 to 530 (KIYVQ), and D562 contribute to the NADP(+) site. Y600 serves as a coordination point for FAD.

It belongs to the NADPH-dependent sulphite reductase flavoprotein subunit CysJ family. In the N-terminal section; belongs to the flavodoxin family. The protein in the C-terminal section; belongs to the flavoprotein pyridine nucleotide cytochrome reductase family. In terms of assembly, alpha(8)-beta(8). The alpha component is a flavoprotein, the beta component is a hemoprotein. FAD serves as cofactor. FMN is required as a cofactor.

The catalysed reaction is hydrogen sulfide + 3 NADP(+) + 3 H2O = sulfite + 3 NADPH + 4 H(+). It participates in sulfur metabolism; hydrogen sulfide biosynthesis; hydrogen sulfide from sulfite (NADPH route): step 1/1. Component of the sulfite reductase complex that catalyzes the 6-electron reduction of sulfite to sulfide. This is one of several activities required for the biosynthesis of L-cysteine from sulfate. The flavoprotein component catalyzes the electron flow from NADPH -&gt; FAD -&gt; FMN to the hemoprotein component. This Photorhabdus laumondii subsp. laumondii (strain DSM 15139 / CIP 105565 / TT01) (Photorhabdus luminescens subsp. laumondii) protein is Sulfite reductase [NADPH] flavoprotein alpha-component.